The following is a 236-amino-acid chain: Outer membrane protein P.III (236 aa).

The N-terminal stretch at 1–22 is a signal peptide; the sequence is MTKQLKLSALFVALLASGTAVA. 4 consecutive repeat copies span residues 69 to 70, 71 to 72, 73 to 74, and 75 to 76. Residues 69-76 form a 4 X 2 AA tandem repeats of X-P region; sequence VPEPEPAP. In terms of domain architecture, OmpA-like spans 86-223; sequence YVDETISLSA…RVDVKIRSIV (138 aa). Cysteine 185 and cysteine 208 are disulfide-bonded.

The protein belongs to the outer membrane OOP (TC 1.B.6) superfamily.

It localises to the cell outer membrane. This is Outer membrane protein P.III from Neisseria gonorrhoeae.